The chain runs to 49 residues: Small, acid-soluble spore protein O (49 aa).

A disordered region spans residues 1 to 49 (MGKRKANHTISGMNAASAQGQGTGYNEEFANEPFTPAERQNNKKRKKNQ). Residues 8 to 20 (HTISGMNAASAQG) are compositionally biased toward polar residues.

It belongs to the SspO family.

The protein localises to the spore core. This Bacillus cereus (strain ATCC 14579 / DSM 31 / CCUG 7414 / JCM 2152 / NBRC 15305 / NCIMB 9373 / NCTC 2599 / NRRL B-3711) protein is Small, acid-soluble spore protein O.